The chain runs to 113 residues: U11-theraphotoxin-Hhn1a (113 aa).

An N-terminal signal peptide occupies residues 1–21 (MNTVRVTFLLVFVLAVSLGRA). A propeptide spanning residues 22–74 (DKDENRMEMQEKTEQGKSYLDFAENLLLQKLEELEAKLLEEDSEESRNSRQKR) is cleaved from the precursor. Intrachain disulfides connect Cys75/Cys90, Cys82/Cys95, and Cys89/Cys110.

Belongs to the neurotoxin 14 (magi-1) family. 01 (HNTX-16) subfamily. Expressed by the venom gland.

Its subcellular location is the secreted. Probable ion channel inhibitor. In Cyriopagopus hainanus (Chinese bird spider), this protein is U11-theraphotoxin-Hhn1a.